Reading from the N-terminus, the 101-residue chain is Putative pterin-4-alpha-carbinolamine dehydratase (101 aa).

The protein belongs to the pterin-4-alpha-carbinolamine dehydratase family.

It catalyses the reaction (4aS,6R)-4a-hydroxy-L-erythro-5,6,7,8-tetrahydrobiopterin = (6R)-L-erythro-6,7-dihydrobiopterin + H2O. This Rhodopseudomonas palustris (strain HaA2) protein is Putative pterin-4-alpha-carbinolamine dehydratase.